Consider the following 252-residue polypeptide: Imidazole glycerol phosphate synthase subunit HisF (252 aa).

Active-site residues include D12 and D131.

The protein belongs to the HisA/HisF family. As to quaternary structure, heterodimer of HisH and HisF.

It localises to the cytoplasm. The catalysed reaction is 5-[(5-phospho-1-deoxy-D-ribulos-1-ylimino)methylamino]-1-(5-phospho-beta-D-ribosyl)imidazole-4-carboxamide + L-glutamine = D-erythro-1-(imidazol-4-yl)glycerol 3-phosphate + 5-amino-1-(5-phospho-beta-D-ribosyl)imidazole-4-carboxamide + L-glutamate + H(+). The protein operates within amino-acid biosynthesis; L-histidine biosynthesis; L-histidine from 5-phospho-alpha-D-ribose 1-diphosphate: step 5/9. Its function is as follows. IGPS catalyzes the conversion of PRFAR and glutamine to IGP, AICAR and glutamate. The HisF subunit catalyzes the cyclization activity that produces IGP and AICAR from PRFAR using the ammonia provided by the HisH subunit. The sequence is that of Imidazole glycerol phosphate synthase subunit HisF from Thermus thermophilus (strain ATCC 27634 / DSM 579 / HB8).